The primary structure comprises 264 residues: Thymidylate synthase (264 aa).

R21 is a dUMP binding site. Residue H51 coordinates (6R)-5,10-methylene-5,6,7,8-tetrahydrofolate. 126–127 (RR) lines the dUMP pocket. C146 serves as the catalytic Nucleophile. DUMP-binding positions include 166–169 (RSAD), N177, and 207–209 (HIY). Residue D169 coordinates (6R)-5,10-methylene-5,6,7,8-tetrahydrofolate. Residue A263 coordinates (6R)-5,10-methylene-5,6,7,8-tetrahydrofolate.

The protein belongs to the thymidylate synthase family. Bacterial-type ThyA subfamily. As to quaternary structure, homodimer.

The protein localises to the cytoplasm. The enzyme catalyses dUMP + (6R)-5,10-methylene-5,6,7,8-tetrahydrofolate = 7,8-dihydrofolate + dTMP. Its pathway is pyrimidine metabolism; dTTP biosynthesis. Its function is as follows. Catalyzes the reductive methylation of 2'-deoxyuridine-5'-monophosphate (dUMP) to 2'-deoxythymidine-5'-monophosphate (dTMP) while utilizing 5,10-methylenetetrahydrofolate (mTHF) as the methyl donor and reductant in the reaction, yielding dihydrofolate (DHF) as a by-product. This enzymatic reaction provides an intracellular de novo source of dTMP, an essential precursor for DNA biosynthesis. The polypeptide is Thymidylate synthase (Bacteroides fragilis (strain ATCC 25285 / DSM 2151 / CCUG 4856 / JCM 11019 / LMG 10263 / NCTC 9343 / Onslow / VPI 2553 / EN-2)).